Reading from the N-terminus, the 105-residue chain is UPF0060 membrane protein Ajs_1326 (105 aa).

A run of 4 helical transmembrane segments spans residues 4–24, 30–50, 60–80, and 82–102; these read FALFIATALAEIVGCYLPYLW, SAWLLVPAAASLALFAWLLTL, AAYGGVYIGVALLWLWIVDGI, and PTAWDVAGVAVALTGMGLIMF.

Belongs to the UPF0060 family.

The protein localises to the cell inner membrane. The chain is UPF0060 membrane protein Ajs_1326 from Acidovorax sp. (strain JS42).